A 787-amino-acid chain; its full sequence is MAVWIQAQQLQGEALHQMQALYGQHFPIEVRHYLSQWIESQAWDSVDLDNPQENIKATQLLEGLVQELQKKAEHQVGEDGFLLKIKLGHYATQLQNTYDRCPMELVRCIRHILYNEQRLVREANNGSSPAGSLADAMSQKHLQINQTFEELRLVTQDTENELKKLQQTQEYFIIQYQESLRIQAQFGPLAQLSPQERLSRETALQQKQVSLEAWLQREAQTLQQYRVELAEKHQKTLQLLRKQQTIILDDELIQWKRRQQLAGNGGPPEGSLDVLQSWCEKLAEIIWQNRQQIRRAEHLCQQLPIPGPVEEMLAEVNATITDIISALVTSTFIIEKQPPQVLKTQTKFAATVRLLVGGKLNVHMNPPQVKATIISEQQAKSLLKNENTRNDYSGEILNNCCVMEYHQATGTLSAHFRNMSLKRIKRSDRRGAESVTEEKFTILFESQFSVGGNELVFQVKTLSLPVVVIVHGSQDNNATATVLWDNAFAEPGRVPFAVPDKVLWPQLCEALNMKFKAEVQSNRGLTKENLVFLAQKLFNNSSSHLEDYSGLSVSWSQFNRENLPGRNYTFWQWFDGVMEVLKKHLKPHWNDGAILGFVNKQQAHDLLINKPDGTFLLRFSDSEIGGITIAWKFDSQERMFWNLMPFTTRDFSIRSLADRLGDLNYLIYVFPDRPKDEVYSKYYTPVPCESATAKAVDGYVKPQIKQVVPEFVNASADAGGGSATYMDQAPSPAVCPQAHYNMYPQNPDSVLDTDGDFDLEDTMDVARRVEELLGRPMDSQWIPHAQS.

Y90 is subject to Phosphotyrosine. 2 positions are modified to phosphoserine: S128 and S193. Positions 232-321 are required for interaction with NMI; that stretch reads KHQKTLQLLR…MLAEVNATIT (90 aa). One can recognise an SH2 domain in the interval 589-686; sequence WNDGAILGFV…EVYSKYYTPV (98 aa). At Y682 the chain carries Phosphotyrosine. Position 699 is a phosphotyrosine; by HCK, JAK and PTK6 (Y699).

This sequence belongs to the transcription factor STAT family. Upon activation, forms homodimers. Forms also heterodimers with related family members. Binds NR3C1. Interacts with NCOA1. Interacts with NMI. Interacts with SOCS7. Interacts (via SH2 domain) with INSR. Interacts with CPEB3; this inhibits STAT5B-mediated transcriptional activation. In terms of processing, tyrosine phosphorylated in response to signaling via activated KIT, resulting in translocation to the nucleus. Tyrosine phosphorylated in response to signaling via activated FLT3; wild-type FLT3 results in much weaker phosphorylation than constitutively activated mutant FLT3. Alternatively, can be phosphorylated by JAK2. Phosphorylation at Tyr-699 by PTK6 or HCK leads to an increase of its transcriptional activity.

Its subcellular location is the cytoplasm. It is found in the nucleus. In terms of biological role, carries out a dual function: signal transduction and activation of transcription. Mediates cellular responses to the cytokine KITLG/SCF and other growth factors. Binds to the GAS element and activates PRL-induced transcription. Positively regulates hematopoietic/erythroid differentiation. This chain is Signal transducer and activator of transcription 5B (STAT5B), found in Homo sapiens (Human).